The following is a 611-amino-acid chain: Inhibitor of apoptosis protein (611 aa).

3 BIR repeats span residues Glu-30–Val-97, Glu-176–Val-242, and His-262–Leu-329. The Zn(2+) site is built by Cys-299, Cys-302, His-319, and Cys-326. Residues Val-446 to Lys-536 enclose the CARD domain. An RING-type zinc finger spans residues Cys-564–Arg-599.

This sequence belongs to the IAP family. Cells of the T-lymphocyte lineage. Found in both cortical and medullary cells of the thymus. Expressed at relatively high levels also in spleen, bursa, intestine and lung and at very low levels in testis, brain and skeletal muscle.

Its subcellular location is the nucleus. It localises to the cytoplasm. Apoptotic suppressor. This chain is Inhibitor of apoptosis protein (ITA), found in Gallus gallus (Chicken).